A 154-amino-acid chain; its full sequence is Probable cyclic pyranopterin monophosphate synthase (154 aa).

Residues 74 to 76 (LCH) and 110 to 111 (ME) each bind substrate. Asp125 is a catalytic residue.

This sequence belongs to the MoaC family. As to quaternary structure, homohexamer; trimer of dimers.

It catalyses the reaction (8S)-3',8-cyclo-7,8-dihydroguanosine 5'-triphosphate = cyclic pyranopterin phosphate + diphosphate. The protein operates within cofactor biosynthesis; molybdopterin biosynthesis. Its function is as follows. Catalyzes the conversion of (8S)-3',8-cyclo-7,8-dihydroguanosine 5'-triphosphate to cyclic pyranopterin monophosphate (cPMP). In Methanosphaerula palustris (strain ATCC BAA-1556 / DSM 19958 / E1-9c), this protein is Probable cyclic pyranopterin monophosphate synthase.